A 431-amino-acid polypeptide reads, in one-letter code: D-inositol 3-phosphate glycosyltransferase (431 aa).

A 1D-myo-inositol 3-phosphate-binding site is contributed by histidine 14. UDP-N-acetyl-alpha-D-glucosamine is bound by residues 20 to 21 (QP) and glycine 28. Residues 25-30 (DAGGMN), lysine 83, tyrosine 116, threonine 140, and arginine 160 each bind 1D-myo-inositol 3-phosphate. Residues arginine 240 and lysine 245 each contribute to the UDP-N-acetyl-alpha-D-glucosamine site. Residues tyrosine 315, arginine 316, and alanine 318 each coordinate Mg(2+). UDP-N-acetyl-alpha-D-glucosamine contacts are provided by glutamate 328 and glutamate 336. Threonine 342 serves as a coordination point for Mg(2+).

The protein belongs to the glycosyltransferase group 1 family. MshA subfamily. In terms of assembly, homodimer.

The enzyme catalyses 1D-myo-inositol 3-phosphate + UDP-N-acetyl-alpha-D-glucosamine = 1D-myo-inositol 2-acetamido-2-deoxy-alpha-D-glucopyranoside 3-phosphate + UDP + H(+). Functionally, catalyzes the transfer of a N-acetyl-glucosamine moiety to 1D-myo-inositol 3-phosphate to produce 1D-myo-inositol 2-acetamido-2-deoxy-glucopyranoside 3-phosphate in the mycothiol biosynthesis pathway. In Thermomonospora curvata (strain ATCC 19995 / DSM 43183 / JCM 3096 / KCTC 9072 / NBRC 15933 / NCIMB 10081 / Henssen B9), this protein is D-inositol 3-phosphate glycosyltransferase.